We begin with the raw amino-acid sequence, 339 residues long: Glycerol-3-phosphate dehydrogenase [NAD(P)+] (339 aa).

NADPH is bound by residues serine 15, tyrosine 16, histidine 36, and lysine 110. Residues lysine 110, glycine 139, and threonine 141 each coordinate sn-glycerol 3-phosphate. Residue alanine 143 coordinates NADPH. Lysine 195, aspartate 248, serine 258, arginine 259, and asparagine 260 together coordinate sn-glycerol 3-phosphate. Catalysis depends on lysine 195, which acts as the Proton acceptor. NADPH is bound at residue arginine 259. NADPH is bound by residues valine 283 and glutamate 285.

The protein belongs to the NAD-dependent glycerol-3-phosphate dehydrogenase family.

The protein resides in the cytoplasm. It carries out the reaction sn-glycerol 3-phosphate + NAD(+) = dihydroxyacetone phosphate + NADH + H(+). The catalysed reaction is sn-glycerol 3-phosphate + NADP(+) = dihydroxyacetone phosphate + NADPH + H(+). It participates in membrane lipid metabolism; glycerophospholipid metabolism. Catalyzes the reduction of the glycolytic intermediate dihydroxyacetone phosphate (DHAP) to sn-glycerol 3-phosphate (G3P), the key precursor for phospholipid synthesis. This Escherichia fergusonii (strain ATCC 35469 / DSM 13698 / CCUG 18766 / IAM 14443 / JCM 21226 / LMG 7866 / NBRC 102419 / NCTC 12128 / CDC 0568-73) protein is Glycerol-3-phosphate dehydrogenase [NAD(P)+].